Here is a 604-residue protein sequence, read N- to C-terminus: ATP-dependent RNA helicase DED1 (604 aa).

The segment covering 1–19 (MAELSEQVQNLSINDNNEN) has biased composition (polar residues). Residues 1-55 (MAELSEQVQNLSINDNNENGYVPPHLRGKPRSARNNSSNYNNNNGGYNGGRGGGS) are disordered. An N-acetylalanine modification is found at Ala2. A compositionally biased stretch (low complexity) spans 34–45 (RNNSSNYNNNNG). The segment covering 46 to 55 (GYNGGRGGGS) has biased composition (gly residues). Omega-N-methylarginine is present on Arg51. Arg62 bears the Dimethylated arginine; alternate mark. Arg62 bears the Omega-N-methylarginine; alternate mark. Over residues 67-76 (NGGFFGGNNG) the composition is skewed to gly residues. The segment at 67–94 (NGGFFGGNNGGSRSNGRSGGRWIDGKHV) is disordered. Residues 142-170 (TEFTSPPLDGLLLENIKLARFTKPTPVQK) carry the Q motif motif. Lys158 participates in a covalent cross-link: Glycyl lysine isopeptide (Lys-Gly) (interchain with G-Cter in ubiquitin). In terms of domain architecture, Helicase ATP-binding spans 173 to 362 (VPIVANGRDL…RDFLSDYIFL (190 aa)). 186–193 (AQTGSGKT) contributes to the ATP binding site. Phosphoserine occurs at positions 215, 218, and 263. The short motif at 306–309 (DEAD) is the DEAD box element. Residues 373 to 533 (NITQKVLYVE…EVPSFLKDAM (161 aa)) enclose the Helicase C-terminal domain. Residues 533 to 604 (MMSAPGSRSN…SGGSNNSSWW (72 aa)) form a disordered region. Ser535, Ser539, and Ser543 each carry phosphoserine. A Dimethylated arginine; alternate modification is found at Arg545. An Omega-N-methylarginine; alternate modification is found at Arg545. A phosphoserine mark is found at Ser572 and Ser576. Arg578 is subject to Omega-N-methylarginine. Residues 584 to 604 (GSDSKSSGWGNSGGSNNSSWW) show a composition bias toward low complexity. Ser598 carries the post-translational modification Phosphoserine.

Belongs to the DEAD box helicase family. DDX3/DED1 subfamily. In terms of assembly, interacts with the L-A virus GAG protein and the whole L-A virus particles.

The protein localises to the cytoplasm. The catalysed reaction is ATP + H2O = ADP + phosphate + H(+). ATP-binding RNA helicase involved in translation initiation. Remodels RNA in response to ADP and ATP concentrations by facilitating disruption, but also formation of RNA duplexes. Has weak ATP-dependent affinity for dsRNA, but strong ATP-dependent affinity for ssRNA. Acts as a virus host factor involved in the replication of the MBV and the L-A viruses by promoting the negative-strand RNA synthesis. May be involved in recognition of the preinitiation complex and DNA binding of the RNA polymerase III and play a role in mRNA splicing. The polypeptide is ATP-dependent RNA helicase DED1 (Saccharomyces cerevisiae (strain ATCC 204508 / S288c) (Baker's yeast)).